The following is an 848-amino-acid chain: Translation initiation factor IF-2 (848 aa).

Positions 1 to 10 are enriched in basic and acidic residues; it reads MSENNNDKIT. 2 disordered regions span residues 1 to 79 and 121 to 163; these read MSEN…EKPV and AERQ…LFSS. Polar residues predominate over residues 17–33; sequence LKRSGSETNTVKQNFNH. Over residues 121-138 the composition is skewed to basic and acidic residues; sequence AERQAAEKQAKESEEGLH. A compositionally biased stretch (polar residues) spans 149-163; sequence KSSSNTTKPTPLFSS. The tr-type G domain maps to 346-513; that stretch reads TRPPIVTIMG…AILLQAEILD (168 aa). Positions 355–362 are G1; sequence GHVDHGKT. Position 355 to 362 (355 to 362) interacts with GTP; the sequence is GHVDHGKT. The tract at residues 380–384 is G2; that stretch reads GITQH. A G3 region spans residues 401–404; it reads DTPG. GTP contacts are provided by residues 401-405 and 455-458; these read DTPGH and NKID. The interval 455 to 458 is G4; the sequence is NKID. The tract at residues 491 to 493 is G5; that stretch reads SAK.

The protein belongs to the TRAFAC class translation factor GTPase superfamily. Classic translation factor GTPase family. IF-2 subfamily.

It localises to the cytoplasm. One of the essential components for the initiation of protein synthesis. Protects formylmethionyl-tRNA from spontaneous hydrolysis and promotes its binding to the 30S ribosomal subunits. Also involved in the hydrolysis of GTP during the formation of the 70S ribosomal complex. The chain is Translation initiation factor IF-2 from Bartonella bacilliformis (strain ATCC 35685 / KC583 / Herrer 020/F12,63).